The primary structure comprises 528 residues: Tyrosine-protein kinase transforming protein Yes (528 aa).

A compositionally biased stretch (basic and acidic residues) spans 1-12; it reads DKGPAMKYRTDN. The tract at residues 1–35 is disordered; it reads DKGPAMKYRTDNTPEPISSHVSHYGSDSSQATQSP. Residues 18–29 are compositionally biased toward low complexity; sequence SSHVSHYGSDSS. The region spanning 81 to 142 is the SH3 domain; that stretch reads GGGTVFVALY…PSNYVAPADS (62 aa). The region spanning 148–245 is the SH2 domain; it reads WYFGKMGRKD…GLCHKLTTVC (98 aa). The Protein kinase domain occupies 267–520; that stretch reads LRLEVKLGQG…YIQSFLEDYF (254 aa). ATP-binding positions include 273–281 and K295; that span reads LGQGCFGEV. The active-site Proton acceptor is D386. A Phosphotyrosine; by autocatalysis modification is found at Y416.

The protein belongs to the protein kinase superfamily. Tyr protein kinase family. SRC subfamily.

It carries out the reaction L-tyrosyl-[protein] + ATP = O-phospho-L-tyrosyl-[protein] + ADP + H(+). The chain is Tyrosine-protein kinase transforming protein Yes (V-YES) from Galliformes (Y73SV).